A 495-amino-acid polypeptide reads, in one-letter code: IQ domain-containing protein IQM5 (495 aa).

The disordered stretch occupies residues 89–122 (ENRGGEEEDERGSSPKRRNRGNLTALSLPAPTPF). The IQ domain occupies 131-160 (LDAAAVTLQKVYKSYRTRRNLADCAVVVEE).

As to expression, expressed in roots, rosette and cauline leaves, and at lower levels in stems, flowers and siliques.

The protein localises to the cytoplasm. Its subcellular location is the nucleus. May be involved in biotic and abiotic stress responses. This Arabidopsis thaliana (Mouse-ear cress) protein is IQ domain-containing protein IQM5.